The primary structure comprises 249 residues: Triosephosphate isomerase (249 aa).

Asn-12 and Lys-14 together coordinate substrate. Residue Lys-14 is modified to N6-acetyllysine. At Tyr-68 the chain carries 3'-nitrotyrosine. A Phosphoserine modification is found at Ser-80. His-96 (electrophile) is an active-site residue. Position 106 is a phosphoserine (Ser-106). Residue Lys-142 forms a Glycyl lysine isopeptide (Lys-Gly) (interchain with G-Cter in SUMO1) linkage. Lys-149 carries the post-translational modification N6-succinyllysine. Lys-156 carries the post-translational modification N6-acetyllysine; alternate. N6-succinyllysine; alternate is present on Lys-156. Ser-159 bears the Phosphoserine mark. Residue Glu-166 is the Proton acceptor of the active site. Thr-173 is subject to Phosphothreonine. An N6-acetyllysine; alternate modification is found at Lys-194. Lys-194 carries the post-translational modification N6-succinyllysine; alternate. Position 194 is an N6-methyllysine; alternate (Lys-194). Phosphoserine is present on Ser-198. Position 209 is a 3'-nitrotyrosine (Tyr-209). At Ser-212 the chain carries Phosphoserine. Position 214 is a phosphothreonine (Thr-214). A Phosphoserine modification is found at Ser-223. Residue Lys-238 is modified to N6-acetyllysine.

Belongs to the triosephosphate isomerase family. Homodimer.

It is found in the cytoplasm. It carries out the reaction dihydroxyacetone phosphate = methylglyoxal + phosphate. It catalyses the reaction D-glyceraldehyde 3-phosphate = dihydroxyacetone phosphate. It participates in carbohydrate degradation; glycolysis; D-glyceraldehyde 3-phosphate from glycerone phosphate: step 1/1. Its pathway is carbohydrate biosynthesis; gluconeogenesis. Functionally, triosephosphate isomerase is an extremely efficient metabolic enzyme that catalyzes the interconversion between dihydroxyacetone phosphate (DHAP) and D-glyceraldehyde-3-phosphate (G3P) in glycolysis and gluconeogenesis. Its function is as follows. It is also responsible for the non-negligible production of methylglyoxal a reactive cytotoxic side-product that modifies and can alter proteins, DNA and lipids. This Canis lupus familiaris (Dog) protein is Triosephosphate isomerase (TPI1).